A 490-amino-acid polypeptide reads, in one-letter code: Fumitremorgin C monooxygenase (490 aa).

A helical membrane pass occupies residues L12 to G32. A heme-binding site is contributed by C442.

Belongs to the cytochrome P450 family. Heme is required as a cofactor.

Its subcellular location is the membrane. It carries out the reaction fumitremorgin C + 2 reduced [NADPH--hemoprotein reductase] + 2 O2 = 12alpha,13alpha-dihydroxyfumitremorgin C + 2 oxidized [NADPH--hemoprotein reductase] + 2 H2O + 2 H(+). Its pathway is mycotoxin biosynthesis. Its function is as follows. Cytochrome P450 monooxygenase; part of the gene cluster that mediates the biosynthesis of fumitremorgins, indole alkaloids that carry not only intriguing chemical structures, but also interesting biological and pharmacological activities. The biosynthesis of fumitremorgin-type alkaloids begins by condensation of the two amino acids L-tryptophan and L-proline to brevianamide F, catalyzed by the non-ribosomal peptide synthetase ftmA. Brevianamide F is then prenylated by the prenyltransferase ftmPT1/ftmB in the presence of dimethylallyl diphosphate, resulting in the formation of tryprostatin B. The three cytochrome P450 monooxygenases, ftmP450-1/ftmC, ftmP450-2/ftmE and ftmP450-3/FtmG, are responsible for the conversion of tryprostatin B to 6-hydroxytryprostatin B, tryprostatin A to fumitremorgin C and fumitremorgin C to 12,13-dihydroxyfumitremorgin C, respectively. The putative methyltransferase ftmMT/ftmD is expected for the conversion of 6-hydroxytryprostatin B to tryprostatin A. FtmPT2/FtmH catalyzes the prenylation of 12,13-dihydroxyfumitre-morgin C in the presence of dimethylallyl diphosphate, resulting in the formation of fumitremorgin B. Fumitremorgin B is further converted to verruculogen by ftmOx1/ftmF via the insertion of an endoperoxide bond between the two prenyl moieties. In some fungal species, verruculogen is further converted to fumitremorgin A, but the enzymes involved in this step have not been identified yet. The protein is Fumitremorgin C monooxygenase of Aspergillus fumigatus (strain ATCC MYA-4609 / CBS 101355 / FGSC A1100 / Af293) (Neosartorya fumigata).